The following is a 291-amino-acid chain: POU class 2 homeobox associating-factor 2 (291 aa).

An OCA domain is found at 7–29 (KRVYQGVRVKHTVKDLLAEKRLR). The segment at 176–219 (AAPVADSPSLAGPDSGSSSPYRLTSGRSGSSIPSSSQPYTLQPL) is disordered. The segment covering 200–211 (SGRSGSSIPSSS) has biased composition (low complexity).

The protein belongs to the POU2AF family.

Its function is as follows. Transcriptional coactivator that may regulate cell type-specific differentiation pathways. This chain is POU class 2 homeobox associating-factor 2 (pou2af2), found in Danio rerio (Zebrafish).